The sequence spans 249 residues: Proteasome subunit alpha type-3 (249 aa).

This sequence belongs to the peptidase T1A family. The 26S proteasome consists of a 20S proteasome core and two 19S regulatory subunits. The 20S proteasome core is composed of 28 subunits that are arranged in four stacked rings, resulting in a barrel-shaped structure. The two end rings are each formed by seven alpha subunits, and the two central rings are each formed by seven beta subunits. The catalytic chamber with the active sites is on the inside of the barrel.

It localises to the cytoplasm. The protein localises to the nucleus. The proteasome is a multicatalytic proteinase complex which is characterized by its ability to cleave peptides with Arg, Phe, Tyr, Leu, and Glu adjacent to the leaving group at neutral or slightly basic pH. The proteasome has an ATP-dependent proteolytic activity. This is Proteasome subunit alpha type-3 (PAG1) from Oryza sativa subsp. japonica (Rice).